The following is a 255-amino-acid chain: Large ribosomal subunit protein uL2 (255 aa).

The tract at residues 211–235 (PHGGGNHQHVGHATTTKRDDPAGKK) is disordered.

It belongs to the universal ribosomal protein uL2 family.

This Dictyostelium discoideum (Social amoeba) protein is Large ribosomal subunit protein uL2 (rpl8).